Reading from the N-terminus, the 235-residue chain is uncharacterized protein (235 aa).

Transmembrane regions (helical) follow at residues 2 to 22 (VIGPFINASAVLLGGVLGALL), 34 to 54 (MTSIFGLASLGIGILLVVKCA), 56 to 76 (LPAMVLATLLGALIGEICLLE), 102 to 122 (FIQNYVAIIVLFCASGTGIFG), 147 to 167 (MIFACSLGIAVSVISIPLLII), 178 to 198 (ILPLTTPSMMADFSAVGGLLL), and 210 to 230 (MFPVVNMLPALLLAMPLSAAW).

The protein localises to the cell membrane. This is an uncharacterized protein from Escherichia coli (strain K12).